The chain runs to 229 residues: 7-cyano-7-deazaguanine synthase (229 aa).

15 to 25 (LSGGLDSATVV) is a binding site for ATP. 4 residues coordinate Zn(2+): C194, C204, C207, and C210.

The protein belongs to the QueC family. Zn(2+) serves as cofactor.

It carries out the reaction 7-carboxy-7-deazaguanine + NH4(+) + ATP = 7-cyano-7-deazaguanine + ADP + phosphate + H2O + H(+). The protein operates within purine metabolism; 7-cyano-7-deazaguanine biosynthesis. Catalyzes the ATP-dependent conversion of 7-carboxy-7-deazaguanine (CDG) to 7-cyano-7-deazaguanine (preQ(0)). The sequence is that of 7-cyano-7-deazaguanine synthase from Pseudomonas syringae pv. syringae (strain B728a).